The following is a 529-amino-acid chain: MTLSPYLQEVAKRRTFAIISHPDAGKTTITEKVLLFGQAIQTAGTVKGRGSNQHAKSDWMEMEKQRGISITTSVMQFPYHDCLVNLLDTPGHEDFSEDTYRTLTAVDCCLMVIDAAKGVEDRTRKLMEVTRLRDTPILTFMNKLDRDIRDPMELLDEVENELKIGCAPITWPIGCGKLFKGVYHLYKDETYLYQSGKGHTIQEVRIVKGLNNPDLDAAVGEDLAQQLRDELELVKGASNEFDKELFLAGEITPVFFGTALGNFGVDHMLDGLVEWAPAPMPRQTDTRTVEASEDKFTGFVFKIQANMDPKHRDRVAFMRVVSGKYEKGMKLRQVRTAKDVVISDALTFMAGDRSHVEEAYPGDILGLHNHGTIQIGDTFTQGEMMKFTGIPNFAPELFRRIRLKDPLKQKQLLKGLVQLSEEGAVQVFRPISNNDLIVGAVGVLQFDVVVARLKSEYNVEAVYESVNVATARWVECADAKKFEEFKRKNESQLALDGGDNLAYIATSMVNLRLAQERYPDVQFHQTREH.

In terms of domain architecture, tr-type G spans 11–280 (AKRRTFAIIS…GLVEWAPAPM (270 aa)). GTP-binding positions include 20-27 (SHPDAGKT), 88-92 (DTPGH), and 142-145 (NKLD).

This sequence belongs to the TRAFAC class translation factor GTPase superfamily. Classic translation factor GTPase family. PrfC subfamily.

The protein resides in the cytoplasm. Its function is as follows. Increases the formation of ribosomal termination complexes and stimulates activities of RF-1 and RF-2. It binds guanine nucleotides and has strong preference for UGA stop codons. It may interact directly with the ribosome. The stimulation of RF-1 and RF-2 is significantly reduced by GTP and GDP, but not by GMP. The sequence is that of Peptide chain release factor 3 from Shigella dysenteriae serotype 1 (strain Sd197).